Here is an 888-residue protein sequence, read N- to C-terminus: C2H2 zinc finger transcription factor sltA (888 aa).

Disordered stretches follow at residues 1-78 (MSTS…QRSP), 132-176 (IDSQ…SSEN), and 388-407 (RSSMPSNREPAQNGAKASAP). 3 stretches are compositionally biased toward polar residues: residues 23–32 (PSLSASTSIE), 167–176 (GLGTSLSSEN), and 388–397 (RSSMPSNREP). 2 consecutive C2H2-type zinc fingers follow at residues 500–522 (QKCKDCDKVFKRPCDLTKHEKTH) and 561–586 (YKCKFAPCTYSSKRESNCKQHMEKAH). Positions 589-663 (DYVRSKHNGR…PTQTGSGDFP (75 aa)) are disordered. A compositionally biased stretch (polar residues) spans 602–632 (KASNGATPQTPSIATPSSKAQGITTPLTGSE).

The protein resides in the nucleus. Transcription factor that contributes to azole resistance by coregulating the expression of the drug target erg11A and the drug efflux pump mdr1. Binds to the 5'-AGGCA-3' motif in the promoters of ergosterol biosynthesis and drug pump genes to regulate their expression. Is able to interact with the promoters of sltA, sltB, erg11A, erg13A, erg24A, mdr1, abcE and mfsC. Involved in antifungal drug resistance to azoles, terbinafine, and simvastatin but not amphotericin B or caspofungin. The protein is C2H2 zinc finger transcription factor sltA of Aspergillus fumigatus (strain CBS 144.89 / FGSC A1163 / CEA10) (Neosartorya fumigata).